Reading from the N-terminus, the 573-residue chain is Putative ferric-chelate reductase 1 (573 aa).

Residues 4–24 (VCKSPQRLLFVLVSCFGLVQS) form a helical membrane-spanning segment. A Reelin domain is found at 15–181 (LVSCFGLVQS…GTTGTSTTPA (167 aa)). The DOMON domain occupies 213–328 (GCYFVAVQAS…NEYYLMIAAG (116 aa)). N-linked (GlcNAc...) asparagine glycans are attached at residues N286 and N300. In terms of domain architecture, Cytochrome b561 spans 332 to 532 (QGNIQFHTNK…YILQDLNLRA (201 aa)). Residues 369-389 (AHGCLMLISWMATGSIGMIIA) traverse the membrane as a helical segment. Heme b-binding residues include H370 and H411. A run of 2 helical transmembrane segments spans residues 414 to 434 (LMTLSIIATAIAFIIVFVSAG) and 441 to 461 (HPVLGCLVMILSLIQPIVAAF). H441 and H477 together coordinate heme b. Helical transmembrane passes span 479 to 499 (CNAFAIKCLAVAAIFTGLALF), 506 to 526 (GWMLKVMGGYLAWEALMYILQ), and 550 to 570 (ILLFLFIIGNLAFLIALLVGI).

This sequence belongs to the FRRS1 family. Heme b serves as cofactor.

Its subcellular location is the membrane. Functionally, putative ferric-chelate reductases reduce Fe(3+) to Fe(2+) before its transport from the endosome to the cytoplasm. In Danio rerio (Zebrafish), this protein is Putative ferric-chelate reductase 1 (frrs1).